Here is a 497-residue protein sequence, read N- to C-terminus: MSQIPETSDIVLIGAGIMSATLGTVLKELEPSLSVTMFETLHDCGQESSQAWNNAGTGHAANCELNYTPQRSDGSVDISKALEVNTEFDISRQLWAHLVGKGAIPDPRAFLHPCPHMSFVWGDDNVAFLRQRHREMAAHHCYHGMEFSEDPAQIAAWAPLIIEGREPGQPIAATRIISGADVDYGALTHLLVKQLQAQSGFSVHYKHRVVALARGADGRWLVTVENVTTYERSTTSARFVFAGAGGGSLDILQKSGIPEGNGYAGFPVSGIWLRCDVDDISARHHAKVYGKAAHGSPPMSVPHLDTRIIGGKRSLLFGPYAGFSSKFLKHGSYADLLRSIEPGNILPMLAVARDDWQLSEYLIGQVLQTSEHQFAALQGFFPRAQREDWQRAVAGQRVQIIKPDPQHTGVLEFGTELLASADKSFVALLGASPGASTAAFIAMEVLQKCFDDRLTPDAWLGRLKQMIPTYGIDLKKDADACRDSRAKTAKVLQLDFV.

This sequence belongs to the MQO family. The cofactor is FAD.

It carries out the reaction (S)-malate + a quinone = a quinol + oxaloacetate. The protein operates within carbohydrate metabolism; tricarboxylic acid cycle; oxaloacetate from (S)-malate (quinone route): step 1/1. The sequence is that of Probable malate:quinone oxidoreductase from Rhodopseudomonas palustris (strain TIE-1).